The chain runs to 195 residues: ATP-dependent Clp protease proteolytic subunit (195 aa).

The active-site Nucleophile is serine 101. Histidine 126 is a catalytic residue.

It belongs to the peptidase S14 family.

It is found in the plastid. The protein resides in the chloroplast stroma. It catalyses the reaction Hydrolysis of proteins to small peptides in the presence of ATP and magnesium. alpha-casein is the usual test substrate. In the absence of ATP, only oligopeptides shorter than five residues are hydrolyzed (such as succinyl-Leu-Tyr-|-NHMec, and Leu-Tyr-Leu-|-Tyr-Trp, in which cleavage of the -Tyr-|-Leu- and -Tyr-|-Trp bonds also occurs).. In terms of biological role, cleaves peptides in various proteins in a process that requires ATP hydrolysis. Has a chymotrypsin-like activity. Plays a major role in the degradation of misfolded proteins. This is ATP-dependent Clp protease proteolytic subunit from Bigelowiella natans (Pedinomonas minutissima).